We begin with the raw amino-acid sequence, 246 residues long: Orotidine 5'-phosphate decarboxylase (246 aa).

Substrate contacts are provided by residues Asp22, Lys44, 71 to 80 (DLKFHDIPNT), Thr131, Arg192, Gln201, Gly221, and Arg222. Lys73 acts as the Proton donor in catalysis.

It belongs to the OMP decarboxylase family. Type 1 subfamily. In terms of assembly, homodimer.

The enzyme catalyses orotidine 5'-phosphate + H(+) = UMP + CO2. The protein operates within pyrimidine metabolism; UMP biosynthesis via de novo pathway; UMP from orotate: step 2/2. In terms of biological role, catalyzes the decarboxylation of orotidine 5'-monophosphate (OMP) to uridine 5'-monophosphate (UMP). This is Orotidine 5'-phosphate decarboxylase from Enterobacter sp. (strain 638).